Here is a 346-residue protein sequence, read N- to C-terminus: Small ribosomal subunit biogenesis GTPase RsgA (346 aa).

Positions 1 to 26 (MAKRKLTQNQTRRIQSNNAKTLHRHK) are disordered. Residues 7-20 (TQNQTRRIQSNNAK) are compositionally biased toward polar residues. The CP-type G domain occupies 103 to 271 (ENEISRPDYY…LIDSPGIREF (169 aa)). GTP-binding positions include 159–162 (NKVD) and 213–221 (GQSGVGKSS). Cys295, Cys300, His302, and Cys308 together coordinate Zn(2+).

It belongs to the TRAFAC class YlqF/YawG GTPase family. RsgA subfamily. Monomer. Associates with 30S ribosomal subunit, binds 16S rRNA. Requires Zn(2+) as cofactor.

Its subcellular location is the cytoplasm. In terms of biological role, one of several proteins that assist in the late maturation steps of the functional core of the 30S ribosomal subunit. Helps release RbfA from mature subunits. May play a role in the assembly of ribosomal proteins into the subunit. Circularly permuted GTPase that catalyzes slow GTP hydrolysis, GTPase activity is stimulated by the 30S ribosomal subunit. This Haemophilus influenzae (strain 86-028NP) protein is Small ribosomal subunit biogenesis GTPase RsgA.